Here is a 287-residue protein sequence, read N- to C-terminus: 3-hydroxyanthranilate 3,4-dioxygenase (287 aa).

The tract at residues 1-163 (MTNQSLHVNI…SKENETGKPD (163 aa)) is domain A (catalytic). Arg46 provides a ligand contact to O2. Residues His50, Glu56, and His94 each contribute to the Fe cation site. Residue Glu56 participates in substrate binding. Residues Arg98 and Glu108 each contribute to the substrate site. A linker region spans residues 164–180 (PANPIKPAPYPLNTMNV). A domain B region spans residues 181-287 (MTPFSFREWV…AQDPDRKRPY (107 aa)).

The protein belongs to the 3-HAO family. As to quaternary structure, monomer. Requires Fe(2+) as cofactor.

The protein localises to the cytoplasm. It localises to the cytosol. It carries out the reaction 3-hydroxyanthranilate + O2 = (2Z,4Z)-2-amino-3-carboxymuconate 6-semialdehyde. It functions in the pathway cofactor biosynthesis; NAD(+) biosynthesis; quinolinate from L-kynurenine: step 3/3. Catalyzes the oxidative ring opening of 3-hydroxyanthranilate to 2-amino-3-carboxymuconate semialdehyde, which spontaneously cyclizes to quinolinate. The protein is 3-hydroxyanthranilate 3,4-dioxygenase (haao) of Danio rerio (Zebrafish).